The primary structure comprises 92 residues: UPF0223 protein SPCG_1392 (92 aa).

Belongs to the UPF0223 family.

This Streptococcus pneumoniae (strain CGSP14) protein is UPF0223 protein SPCG_1392.